The chain runs to 337 residues: DNA-directed RNA polymerase subunit alpha (337 aa).

Positions 1–233 (MIQKNWQELI…DQLSIFVNFE (233 aa)) are alpha N-terminal domain (alpha-NTD). The interval 249-337 (FNPVLLKKVD…DLAKRYEDQY (89 aa)) is alpha C-terminal domain (alpha-CTD).

It belongs to the RNA polymerase alpha chain family. Homodimer. The RNAP catalytic core consists of 2 alpha, 1 beta, 1 beta' and 1 omega subunit. When a sigma factor is associated with the core the holoenzyme is formed, which can initiate transcription.

The catalysed reaction is RNA(n) + a ribonucleoside 5'-triphosphate = RNA(n+1) + diphosphate. DNA-dependent RNA polymerase catalyzes the transcription of DNA into RNA using the four ribonucleoside triphosphates as substrates. The polypeptide is DNA-directed RNA polymerase subunit alpha (Brucella canis (strain ATCC 23365 / NCTC 10854 / RM-666)).